A 58-amino-acid polypeptide reads, in one-letter code: MTQLSQSNVERVALVYISVYFFSCISLIVYFFTFCLSVSIPKNRQHPIKIIYNNKCPS.

The chain crosses the membrane as a helical span at residues 12-32 (VALVYISVYFFSCISLIVYFF).

The protein resides in the membrane. This is an uncharacterized protein from Saccharomyces cerevisiae (strain ATCC 204508 / S288c) (Baker's yeast).